We begin with the raw amino-acid sequence, 245 residues long: 1-(5-phosphoribosyl)-5-[(5-phosphoribosylamino)methylideneamino] imidazole-4-carboxamide isomerase (245 aa).

Catalysis depends on aspartate 7, which acts as the Proton acceptor. Aspartate 129 acts as the Proton donor in catalysis.

It belongs to the HisA/HisF family.

It localises to the cytoplasm. The enzyme catalyses 1-(5-phospho-beta-D-ribosyl)-5-[(5-phospho-beta-D-ribosylamino)methylideneamino]imidazole-4-carboxamide = 5-[(5-phospho-1-deoxy-D-ribulos-1-ylimino)methylamino]-1-(5-phospho-beta-D-ribosyl)imidazole-4-carboxamide. The protein operates within amino-acid biosynthesis; L-histidine biosynthesis; L-histidine from 5-phospho-alpha-D-ribose 1-diphosphate: step 4/9. This chain is 1-(5-phosphoribosyl)-5-[(5-phosphoribosylamino)methylideneamino] imidazole-4-carboxamide isomerase, found in Idiomarina loihiensis (strain ATCC BAA-735 / DSM 15497 / L2-TR).